Consider the following 125-residue polypeptide: Protein ApaG (125 aa).

Residues 3-125 enclose the ApaG domain; that stretch reads TAVTEGIEVT…FPLVVPGSLN (123 aa).

The protein is Protein ApaG of Anaeromyxobacter dehalogenans (strain 2CP-1 / ATCC BAA-258).